A 99-amino-acid chain; its full sequence is DNA-binding protein Fis (99 aa).

The H-T-H motif DNA-binding region spans 75-94 (QTRAATMLGINRGTLRKKLK).

This sequence belongs to the transcriptional regulatory Fis family. In terms of assembly, homodimer.

Activates ribosomal RNA transcription. Plays a direct role in upstream activation of rRNA promoters. The polypeptide is DNA-binding protein Fis (Pasteurella multocida (strain Pm70)).